The following is a 382-amino-acid chain: Homeobox protein bagpipe (382 aa).

Disordered regions lie at residues 27 to 66, 144 to 178, and 314 to 382; these read NDIL…SKSP, TSND…KKRS, and QPIP…VEID. The span at 48–62 shows a compositional bias: basic and acidic residues; it reads EPEKLKPSSDRERSI. The span at 158 to 170 shows a compositional bias: low complexity; the sequence is SSPSESPLSHDGS. The segment at residues 175 to 234 is a DNA-binding region (homeobox); that stretch reads KKRSRAAFSHAQVFELERRFAQQRYLSGPERSEMAKSLRLTETQVKIWFQNRRYKTKRKQ. Low complexity predominate over residues 321-335; sequence QSSSFVTASSASSSP. A compositionally biased stretch (acidic residues) spans 373 to 382; sequence EDVDENVEID.

Belongs to the NK-3 homeobox family. Is expressed in a segmented pattern in visceral muscle and in a subset of cardiac muscles. Loss of activity results in segmental gaps in midgut visceral muscle.

Its subcellular location is the nucleus. In terms of biological role, involved in the determination of cell fates in the dorsal mesoderm. This is Homeobox protein bagpipe (bap) from Drosophila melanogaster (Fruit fly).